The chain runs to 414 residues: Tyrosine--tRNA ligase (414 aa).

The 'HIGH' region motif lies at 57–66 (PSAPDVHIGH). The short motif at 241-245 (KMSKS) is the 'KMSKS' region element. An ATP-binding site is contributed by lysine 244. Residues 352 to 413 (VPLIDLLVTL…GKRKFAKLSL (62 aa)) form the S4 RNA-binding domain.

It belongs to the class-I aminoacyl-tRNA synthetase family. TyrS type 2 subfamily. In terms of assembly, homodimer.

The protein resides in the cytoplasm. The enzyme catalyses tRNA(Tyr) + L-tyrosine + ATP = L-tyrosyl-tRNA(Tyr) + AMP + diphosphate + H(+). Catalyzes the attachment of tyrosine to tRNA(Tyr) in a two-step reaction: tyrosine is first activated by ATP to form Tyr-AMP and then transferred to the acceptor end of tRNA(Tyr). In Shouchella clausii (strain KSM-K16) (Alkalihalobacillus clausii), this protein is Tyrosine--tRNA ligase.